The sequence spans 138 residues: Larval cuticle protein 1 (138 aa).

The N-terminal stretch at M1–A16 is a signal peptide. A Chitin-binding type R&amp;R domain is found at A49 to P110.

Its function is as follows. Component of the larval cuticle. The sequence is that of Larval cuticle protein 1 (Lcp1) from Drosophila miranda (Fruit fly).